We begin with the raw amino-acid sequence, 182 residues long: Dual-action ribosomal maturation protein DarP (182 aa).

Positions M1–H25 are disordered.

This sequence belongs to the DarP family.

The protein resides in the cytoplasm. Functionally, member of a network of 50S ribosomal subunit biogenesis factors which assembles along the 30S-50S interface, preventing incorrect 23S rRNA structures from forming. Promotes peptidyl transferase center (PTC) maturation. This Nitrosospira multiformis (strain ATCC 25196 / NCIMB 11849 / C 71) protein is Dual-action ribosomal maturation protein DarP.